Reading from the N-terminus, the 204-residue chain is MSYEYGTGATAVGIRGAGYVVLAAEKRVSYGGFIISKTARKVYKITDYLGLALAGLFADLQAISKILRAEIEYYNIVTGRRISVRAVARLLATILYSYKYYPFLSETLVGGLEADGTAKLYVMDPLGSLIEDDYAAIGSGAPIAIGILENGYSKDMSVDDAKKLAIAAVRAAIERDAMSGDGIDLLVIRREEDSIKAEEESITI.

Positions 1–9 (MSYEYGTGA) are cleaved as a propeptide — removed in mature form; by autocatalysis. Thr-10 (nucleophile) is an active-site residue.

It belongs to the peptidase T1B family. In terms of assembly, the 20S proteasome core is composed of 14 alpha and 14 beta subunits that assemble into four stacked heptameric rings, resulting in a barrel-shaped structure. The two inner rings, each composed of seven catalytic beta subunits, are sandwiched by two outer rings, each composed of seven alpha subunits. The catalytic chamber with the active sites is on the inside of the barrel. Has a gated structure, the ends of the cylinder being occluded by the N-termini of the alpha-subunits. Is capped at one or both ends by the proteasome regulatory ATPase, PAN.

Its subcellular location is the cytoplasm. It carries out the reaction Cleavage of peptide bonds with very broad specificity.. Its activity is regulated as follows. The formation of the proteasomal ATPase PAN-20S proteasome complex, via the docking of the C-termini of PAN into the intersubunit pockets in the alpha-rings, triggers opening of the gate for substrate entry. Interconversion between the open-gate and close-gate conformations leads to a dynamic regulation of the 20S proteasome proteolysis activity. Functionally, component of the proteasome core, a large protease complex with broad specificity involved in protein degradation. The chain is Proteasome subunit beta 1 from Hyperthermus butylicus (strain DSM 5456 / JCM 9403 / PLM1-5).